The following is a 712-amino-acid chain: Protein phosphatase 1 regulatory subunit 37 (712 aa).

Over residues 1 to 12 (MEIPPQEAPPGP) the composition is skewed to pro residues. The segment at 1–47 (MEIPPQEAPPGPGADADADAEAETEEASAEAESPTGTSPPADGRLKA) is disordered. Acidic residues predominate over residues 16–29 (ADADAEAETEEASA). 2 positions are modified to phosphoserine: Ser56 and Ser62. 5 LRR repeats span residues 226-246 (SLAV…MLLA), 254-275 (NLRE…AQLG), 283-303 (SLQI…AYIC), 312-332 (GLVT…AFLG), and 340-360 (SLET…RNLK). The segment at 492–680 (ESGELPAVGS…PPGLEAKGGS (189 aa)) is disordered. Positions 514 to 531 (SDSDSDSDREEQEEEEED) are enriched in acidic residues. A Phosphoserine modification is found at Ser583. Residues 605 to 626 (PPVPPTFVSSPPPSPPSPPASP) are compositionally biased toward pro residues. Residues 639 to 651 (SEAQPQLEPSQAG) show a composition bias toward polar residues.

Belongs to the PPP1R37 family. In terms of assembly, interacts with PPP1CA.

Inhibits phosphatase activity of protein phosphatase 1 (PP1) complexes. The chain is Protein phosphatase 1 regulatory subunit 37 (Ppp1r37) from Mus musculus (Mouse).